We begin with the raw amino-acid sequence, 258 residues long: Acyl-[acyl-carrier-protein]--UDP-N-acetylglucosamine O-acyltransferase (258 aa).

This sequence belongs to the transferase hexapeptide repeat family. LpxA subfamily. In terms of assembly, homotrimer.

The protein localises to the cytoplasm. The enzyme catalyses a (3R)-hydroxyacyl-[ACP] + UDP-N-acetyl-alpha-D-glucosamine = a UDP-3-O-[(3R)-3-hydroxyacyl]-N-acetyl-alpha-D-glucosamine + holo-[ACP]. Its pathway is glycolipid biosynthesis; lipid IV(A) biosynthesis; lipid IV(A) from (3R)-3-hydroxytetradecanoyl-[acyl-carrier-protein] and UDP-N-acetyl-alpha-D-glucosamine: step 1/6. Functionally, involved in the biosynthesis of lipid A, a phosphorylated glycolipid that anchors the lipopolysaccharide to the outer membrane of the cell. The protein is Acyl-[acyl-carrier-protein]--UDP-N-acetylglucosamine O-acyltransferase of Neisseria meningitidis serogroup B (strain ATCC BAA-335 / MC58).